Here is a 377-residue protein sequence, read N- to C-terminus: Phospho-N-acetylmuramoyl-pentapeptide-transferase (377 aa).

10 helical membrane passes run 2–22 (IQLL…TPAL), 55–75 (VAIL…SVLA), 82–102 (ITLS…VGFL), 122–142 (MVLQ…FPDA), 162–182 (LAFA…NLIA), 195–215 (LDGL…LITL), 236–256 (PMDL…FLWW), 263–283 (IFMG…FAVL), 288–308 (LLLV…ILQV), and 343–363 (FWVI…GDWL).

This sequence belongs to the glycosyltransferase 4 family. MraY subfamily. Mg(2+) serves as cofactor.

It is found in the cell membrane. It carries out the reaction UDP-N-acetyl-alpha-D-muramoyl-L-alanyl-gamma-D-glutamyl-meso-2,6-diaminopimeloyl-D-alanyl-D-alanine + di-trans,octa-cis-undecaprenyl phosphate = di-trans,octa-cis-undecaprenyl diphospho-N-acetyl-alpha-D-muramoyl-L-alanyl-D-glutamyl-meso-2,6-diaminopimeloyl-D-alanyl-D-alanine + UMP. It functions in the pathway cell wall biogenesis; peptidoglycan biosynthesis. In terms of biological role, catalyzes the initial step of the lipid cycle reactions in the biosynthesis of the cell wall peptidoglycan: transfers peptidoglycan precursor phospho-MurNAc-pentapeptide from UDP-MurNAc-pentapeptide onto the lipid carrier undecaprenyl phosphate, yielding undecaprenyl-pyrophosphoryl-MurNAc-pentapeptide, known as lipid I. The sequence is that of Phospho-N-acetylmuramoyl-pentapeptide-transferase from Kocuria rhizophila (strain ATCC 9341 / DSM 348 / NBRC 103217 / DC2201).